The sequence spans 411 residues: uncharacterized protein (411 aa).

This is an uncharacterized protein from Magallana gigas (Pacific oyster).